Reading from the N-terminus, the 461-residue chain is MRVLIKNGIVVNADGQAKQDLLIESGIVRQLGTDISPQLPCEEIDASGCYVFPGGVDVHTHFNIDVGIARSCDDFFTGTRAAACGGTTTIIDHMGFGPNGCRLRHQLEVYRGYAAHKAVIDYSFHGVIQHINHAILDEIPMMVEEGLSSFKLYLTYQYKLNDDEVLQALRRLHESGALTTVHPENDAAIASKRAEFIAAGLTAPRYHALSRPLECEAEAIARMINLAQIAGNAPLYIVHLSNGLGLDYLRLARANHQPVWVETCPQYLLLDERSYDTEDGMKFILSPPLRNVREQDKLWCGISDGAIDVVATDHCTFSMAQRQQISKGDFSRCPNGLPGVENRMQLLFSSGVMTGRISPERFVELTSAMPARLFGLWPQKGILAPGSDGDVVIIDPRQSQQIQHRHLHDNADYSPWEGFTCQGAIVRTLSRGETIFCDGTFTGKAGRGRFLRRKPFVPPVL.

Positions 59, 61, and 151 each coordinate a divalent metal cation. Residue Lys-151 is modified to N6-carboxylysine. Tyr-156 contacts substrate. A divalent metal cation contacts are provided by His-182 and His-239. Ser-286 is a substrate binding site. Asp-313 serves as a coordination point for a divalent metal cation. Position 335 (Asn-335) interacts with substrate.

The protein belongs to the metallo-dependent hydrolases superfamily. Hydantoinase/dihydropyrimidinase family. Homotetramer. It depends on a divalent metal cation as a cofactor. Carboxylation allows a single lysine to coordinate two divalent metal cations.

It carries out the reaction D-5-phenylhydantoin + H2O = N-carbamoyl-D-phenylglycine + H(+). Its function is as follows. Catalyzes the stereospecific hydrolysis of the cyclic amide bond of D-hydantoin derivatives with an aromatic side chains at the 5'-position. Has no activity on dihydropyrimidines. The physiological function is unknown. The chain is D-phenylhydantoinase from Escherichia coli O81 (strain ED1a).